Reading from the N-terminus, the 247-residue chain is MTRLWASLLTVIIYILSQFLPLLIVKKLPFVQYSGIELTKAVIYIQLVLFLIAATTIILINLKIKNPTKLELEVKEPKKYIIPWALLGFALVMIYQMVVSIVLTQIYGGQQVSPNTEKLIIIARKIPIFIFFVSIIGPLLEEYVFRKVIFGELFNAIKGNRIVAFIIATTVSSLIFALAHNDFKFIPVYFGMGVIFSLAYVWTKRLAVPIIIHMLQNGFVVIFQLLNPEALKKATEQANFIYHIFIP.

Residues Met1–Ser17 form the signal peptide. The next 3 helical transmembrane spans lie at Val42–Leu62, Ile81–Ile101, and Leu119–Leu139. Residue Glu141 is part of the active site. The next 2 membrane-spanning stretches (helical) occupy residues Ile162 to Asp182 and Phe183 to Thr203.

It belongs to the peptidase U48 family.

Its subcellular location is the membrane. Functionally, participates in the regulation of the Agr quorum sensing activity and plays thereby an important role in virulence. Mechanistically, elicits a protease dependent control of Agr activity without playing a role in the processing of the pheromone-precursor AgrD. This is Membrane-embedded CAAX protease MroQ (mroQ) from Staphylococcus aureus (strain USA300).